The primary structure comprises 502 residues: Cardiolipin synthase (502 aa).

3 helical membrane-spanning segments follow: residues 7–27, 29–49, and 59–79; these read VAIL…YWGG, LLGI…FVIS, and IAWL…YLLF. 2 consecutive PLD phosphodiesterase domains span residues 237-264 and 415-442; these read INFR…GDEY and EKGF…DMRS. Residues His242, Lys244, Asp249, His420, Lys422, and Asp427 contribute to the active site.

Belongs to the phospholipase D family. Cardiolipin synthase subfamily.

It is found in the cell membrane. It carries out the reaction 2 a 1,2-diacyl-sn-glycero-3-phospho-(1'-sn-glycerol) = a cardiolipin + glycerol. Functionally, catalyzes the reversible phosphatidyl group transfer from one phosphatidylglycerol molecule to another to form cardiolipin (CL) (diphosphatidylglycerol) and glycerol. The protein is Cardiolipin synthase (cls) of Geobacillus thermodenitrificans (strain NG80-2).